A 312-amino-acid polypeptide reads, in one-letter code: uncharacterized protein (312 aa).

This is an uncharacterized protein from Escherichia coli O157:H7.